Reading from the N-terminus, the 522-residue chain is Thiamine biosynthetic bifunctional enzyme TH1, chloroplastic (522 aa).

A chloroplast-targeting transit peptide spans 1–36 (MNSLGGIRSWPANWRSTTASMTTTESVRKVPQVLTV). 4-amino-2-methyl-5-(diphosphooxymethyl)pyrimidine is bound by residues 345-349 (QLREK) and asparagine 377. Positions 378 and 397 each coordinate Mg(2+). Serine 416 is a 4-amino-2-methyl-5-(diphosphooxymethyl)pyrimidine binding site. 442–444 (TNT) lines the 2-[(2R,5Z)-2-carboxy-4-methylthiazol-5(2H)-ylidene]ethyl phosphate pocket. Position 445 (lysine 445) interacts with 4-amino-2-methyl-5-(diphosphooxymethyl)pyrimidine. 2-[(2R,5Z)-2-carboxy-4-methylthiazol-5(2H)-ylidene]ethyl phosphate-binding positions include glycine 472 and 495–496 (VS).

Belongs to the thiamine-phosphate synthase family. The cofactor is Mg(2+).

Its subcellular location is the plastid. The protein resides in the chloroplast. It catalyses the reaction 2-[(2R,5Z)-2-carboxy-4-methylthiazol-5(2H)-ylidene]ethyl phosphate + 4-amino-2-methyl-5-(diphosphooxymethyl)pyrimidine + 2 H(+) = thiamine phosphate + CO2 + diphosphate. It carries out the reaction 2-(2-carboxy-4-methylthiazol-5-yl)ethyl phosphate + 4-amino-2-methyl-5-(diphosphooxymethyl)pyrimidine + 2 H(+) = thiamine phosphate + CO2 + diphosphate. The enzyme catalyses 4-methyl-5-(2-phosphooxyethyl)-thiazole + 4-amino-2-methyl-5-(diphosphooxymethyl)pyrimidine + H(+) = thiamine phosphate + diphosphate. The catalysed reaction is 4-amino-5-hydroxymethyl-2-methylpyrimidine + ATP = 4-amino-2-methyl-5-(phosphooxymethyl)pyrimidine + ADP + H(+). The protein operates within cofactor biosynthesis; thiamine diphosphate biosynthesis; thiamine phosphate from 4-amino-2-methyl-5-diphosphomethylpyrimidine and 4-methyl-5-(2-phosphoethyl)-thiazole: step 1/1. It functions in the pathway cofactor biosynthesis; thiamine diphosphate biosynthesis; 4-amino-2-methyl-5-diphosphomethylpyrimidine from 5-amino-1-(5-phospho-D-ribosyl)imidazole: step 2/3. Functionally, essential for thiamine biosynthesis. Bifunctional enzyme that catalyzes the phosphorylation of hydroxymethylpyrimidine phosphate (HMP-P) to HMP-PP and condenses 4-methyl-5-(beta-hydroxyethyl)thiazole monophosphate (THZ-P) and 2-methyl-4-amino-5-hydroxymethyl pyrimidine pyrophosphate (HMP-PP) to form thiamine monophosphate (TMP). In Arabidopsis thaliana (Mouse-ear cress), this protein is Thiamine biosynthetic bifunctional enzyme TH1, chloroplastic (TH1).